We begin with the raw amino-acid sequence, 370 residues long: Putative FBD-associated F-box protein At1g50980 (370 aa).

The F-box domain occupies 31 to 77; the sequence is IRTISEFPDKVLLKILSLLPSKDVVATGVLSKRWRSLWKDVKTFRTS. The FBD domain occupies 292 to 343; the sequence is LMGNQPDLIPKSLSSHLEILEWRQYNDTAQEREAAKYILANASGLRKATFYT.

This Arabidopsis thaliana (Mouse-ear cress) protein is Putative FBD-associated F-box protein At1g50980.